Reading from the N-terminus, the 431-residue chain is Tol-Pal system protein TolB (431 aa).

Positions 1-26 (MSLMTKLGFRALVASCLITAGSAANA) are cleaved as a signal peptide. The tract at residues 406–431 (DGSAPPQILSVQGGSVREPSWGPFMQ) is disordered.

The protein belongs to the TolB family. As to quaternary structure, the Tol-Pal system is composed of five core proteins: the inner membrane proteins TolA, TolQ and TolR, the periplasmic protein TolB and the outer membrane protein Pal. They form a network linking the inner and outer membranes and the peptidoglycan layer.

It is found in the periplasm. Functionally, part of the Tol-Pal system, which plays a role in outer membrane invagination during cell division and is important for maintaining outer membrane integrity. This chain is Tol-Pal system protein TolB, found in Burkholderia cenocepacia (strain HI2424).